Reading from the N-terminus, the 167-residue chain is MPLRRCRAWRGHSQPGTGSRSNEIPKHRNVVAFLDDFSHVVCRGPTEQRVIIAAVGKLVDRIAQTGKVAGDQVAVFVATERFKQVKPSDQAGLRDADGLEQAGKLAVDVLQLELLDWLTESINGGSDFCLIILKIGEVDPMALILAKFVDSASPLKPAVLIHRAPAF.

The span at Met1 to Arg10 shows a compositional bias: basic residues. The disordered stretch occupies residues Met1 to Glu23.

This is an uncharacterized protein from Sinorhizobium fredii (strain NBRC 101917 / NGR234).